Here is a 299-residue protein sequence, read N- to C-terminus: Ribosomal RNA small subunit methyltransferase A (299 aa).

6 residues coordinate S-adenosyl-L-methionine: N44, V46, G71, E92, D122, and N141.

The protein belongs to the class I-like SAM-binding methyltransferase superfamily. rRNA adenine N(6)-methyltransferase family. RsmA subfamily.

It is found in the cytoplasm. It carries out the reaction adenosine(1518)/adenosine(1519) in 16S rRNA + 4 S-adenosyl-L-methionine = N(6)-dimethyladenosine(1518)/N(6)-dimethyladenosine(1519) in 16S rRNA + 4 S-adenosyl-L-homocysteine + 4 H(+). Functionally, specifically dimethylates two adjacent adenosines (A1518 and A1519) in the loop of a conserved hairpin near the 3'-end of 16S rRNA in the 30S particle. May play a critical role in biogenesis of 30S subunits. This chain is Ribosomal RNA small subunit methyltransferase A, found in Rhodococcus erythropolis (strain PR4 / NBRC 100887).